Reading from the N-terminus, the 857-residue chain is Glucans biosynthesis glucosyltransferase H (857 aa).

The next 6 membrane-spanning stretches (helical) occupy residues 142–162 (ILLA…KGIL), 196–216 (ILIL…TALM), 515–535 (VFLT…FLVL), 572–592 (LFST…ILIW), 606–626 (TLSM…RMIF), and 682–702 (FLWW…VSVI).

The protein belongs to the glycosyltransferase 2 family. OpgH subfamily.

It is found in the cell inner membrane. It functions in the pathway glycan metabolism; osmoregulated periplasmic glucan (OPG) biosynthesis. Involved in the biosynthesis of osmoregulated periplasmic glucans (OPGs). This Pseudomonas putida (strain ATCC 700007 / DSM 6899 / JCM 31910 / BCRC 17059 / LMG 24140 / F1) protein is Glucans biosynthesis glucosyltransferase H.